Reading from the N-terminus, the 508-residue chain is Photosystem II CP47 reaction center protein (508 aa).

Helical transmembrane passes span 21-36 (SVHIMHTALVSGWAGS), 101-115 (IMLSGLCFLAAIWHW), 140-156 (GIHLFLAGVACFGFGAF), 203-218 (IAAGTLGILAGLFHLS), 237-252 (VLSSSIAAVFFAAFVV), and 457-472 (SFALLFFFGHIWHGAR).

Belongs to the PsbB/PsbC family. PsbB subfamily. As to quaternary structure, PSII is composed of 1 copy each of membrane proteins PsbA, PsbB, PsbC, PsbD, PsbE, PsbF, PsbH, PsbI, PsbJ, PsbK, PsbL, PsbM, PsbT, PsbX, PsbY, PsbZ, Psb30/Ycf12, at least 3 peripheral proteins of the oxygen-evolving complex and a large number of cofactors. It forms dimeric complexes. Requires Binds multiple chlorophylls. PSII binds additional chlorophylls, carotenoids and specific lipids. as cofactor.

The protein localises to the plastid. Its subcellular location is the chloroplast thylakoid membrane. In terms of biological role, one of the components of the core complex of photosystem II (PSII). It binds chlorophyll and helps catalyze the primary light-induced photochemical processes of PSII. PSII is a light-driven water:plastoquinone oxidoreductase, using light energy to abstract electrons from H(2)O, generating O(2) and a proton gradient subsequently used for ATP formation. The polypeptide is Photosystem II CP47 reaction center protein (Piper cenocladum (Ant piper)).